Here is a 478-residue protein sequence, read N- to C-terminus: Ribulose bisphosphate carboxylase large chain (478 aa).

A propeptide spanning residues 1-2 is cleaved from the precursor; the sequence is MS. Substrate contacts are provided by Asn-123 and Thr-173. Lys-175 (proton acceptor) is an active-site residue. Position 177 (Lys-177) interacts with substrate. Residues Lys-201, Asp-203, and Glu-204 each coordinate Mg(2+). Lys-201 carries the post-translational modification N6-carboxylysine. Ser-208 is subject to Phosphoserine. Residue His-294 is the Proton acceptor of the active site. Substrate-binding residues include Arg-295 and His-327. Phosphothreonine is present on Thr-330. Ser-379 is a binding site for substrate.

Belongs to the RuBisCO large chain family. Type I subfamily. Heterohexadecamer of 8 large chains and 8 small chains; disulfide-linked. The disulfide link is formed within the large subunit homodimers. Mg(2+) serves as cofactor. Post-translationally, the disulfide bond which can form in the large chain dimeric partners within the hexadecamer appears to be associated with oxidative stress and protein turnover.

The protein localises to the plastid. It localises to the chloroplast. The enzyme catalyses 2 (2R)-3-phosphoglycerate + 2 H(+) = D-ribulose 1,5-bisphosphate + CO2 + H2O. The catalysed reaction is D-ribulose 1,5-bisphosphate + O2 = 2-phosphoglycolate + (2R)-3-phosphoglycerate + 2 H(+). RuBisCO catalyzes two reactions: the carboxylation of D-ribulose 1,5-bisphosphate, the primary event in carbon dioxide fixation, as well as the oxidative fragmentation of the pentose substrate in the photorespiration process. Both reactions occur simultaneously and in competition at the same active site. The chain is Ribulose bisphosphate carboxylase large chain from Lepidium virginicum (Virginia pepperweed).